Consider the following 243-residue polypeptide: Probable transcriptional regulatory protein Athe_0816 (243 aa).

This sequence belongs to the TACO1 family.

The protein localises to the cytoplasm. This chain is Probable transcriptional regulatory protein Athe_0816, found in Caldicellulosiruptor bescii (strain ATCC BAA-1888 / DSM 6725 / KCTC 15123 / Z-1320) (Anaerocellum thermophilum).